The chain runs to 124 residues: MGKTKKRKQSITLIEMMVVITLIGIISGALAFNMRGSLQKGKVFQTEQNCARVYDVLMMEYASGNLSLKEVIANKETLLDNSAWCKEGKKLLKDAWGEDLIVKMNDRGDDIVVLSKKLKSEQRG.

The signal sequence occupies residues 1–31 (MGKTKKRKQSITLIEMMVVITLIGIISGALA).

The protein localises to the cell outer membrane. This chain is Putative outer membrane protein TC_0858, found in Chlamydia muridarum (strain MoPn / Nigg).